A 691-amino-acid chain; its full sequence is Elongation factor G (691 aa).

The tr-type G domain maps to 8–283 (EKQRNIGIMA…AVVQYLPSPL (276 aa)). Residues 17–24 (AHIDAGKT), 81–85 (DTPGH), and 135–138 (NKMD) each bind GTP.

The protein belongs to the TRAFAC class translation factor GTPase superfamily. Classic translation factor GTPase family. EF-G/EF-2 subfamily.

Its subcellular location is the cytoplasm. Catalyzes the GTP-dependent ribosomal translocation step during translation elongation. During this step, the ribosome changes from the pre-translocational (PRE) to the post-translocational (POST) state as the newly formed A-site-bound peptidyl-tRNA and P-site-bound deacylated tRNA move to the P and E sites, respectively. Catalyzes the coordinated movement of the two tRNA molecules, the mRNA and conformational changes in the ribosome. The chain is Elongation factor G from Lawsonia intracellularis (strain PHE/MN1-00).